The sequence spans 396 residues: 1-deoxy-D-xylulose 5-phosphate reductoisomerase (396 aa).

Thr13, Gly14, Ser15, Ile16, and Asn127 together coordinate NADPH. Lys128 lines the 1-deoxy-D-xylulose 5-phosphate pocket. NADPH is bound at residue Glu129. Residue Asp153 coordinates Mn(2+). Residues Ser154, Glu155, Ser184, and His207 each contribute to the 1-deoxy-D-xylulose 5-phosphate site. Glu155 contributes to the Mn(2+) binding site. Residue Gly213 coordinates NADPH. 1-deoxy-D-xylulose 5-phosphate-binding residues include Ser220, Asn225, Lys226, and Glu229. Glu229 is a binding site for Mn(2+).

This sequence belongs to the DXR family. Mg(2+) serves as cofactor. Mn(2+) is required as a cofactor.

The enzyme catalyses 2-C-methyl-D-erythritol 4-phosphate + NADP(+) = 1-deoxy-D-xylulose 5-phosphate + NADPH + H(+). It functions in the pathway isoprenoid biosynthesis; isopentenyl diphosphate biosynthesis via DXP pathway; isopentenyl diphosphate from 1-deoxy-D-xylulose 5-phosphate: step 1/6. Functionally, catalyzes the NADPH-dependent rearrangement and reduction of 1-deoxy-D-xylulose-5-phosphate (DXP) to 2-C-methyl-D-erythritol 4-phosphate (MEP). The protein is 1-deoxy-D-xylulose 5-phosphate reductoisomerase of Pseudomonas syringae pv. tomato (strain ATCC BAA-871 / DC3000).